An 852-amino-acid polypeptide reads, in one-letter code: Lon protease homolog 2, peroxisomal (852 aa).

Ser2 is subject to N-acetylserine. Residues 13–222 (LPLLLTHEGV…MTIPLLVRQI (210 aa)) enclose the Lon N-terminal domain. Residue 375 to 382 (GPPGVGKT) participates in ATP binding. The region spanning 651-837 (LSQPGVAIGL…DEVLNAAFDG (187 aa)) is the Lon proteolytic domain. Active-site residues include Ser743 and Lys786. The Microbody targeting signal signature appears at 850–852 (SKL).

This sequence belongs to the peptidase S16 family. As to quaternary structure, interacts with PEX5. Interacts with TYSND1. May interact with enzymes involved in beta-oxidation of fatty acids, including ACOX1/AOX. In terms of tissue distribution, widely expressed, with high levels in the liver, kidney and pancreas.

It localises to the peroxisome matrix. The enzyme catalyses Hydrolysis of proteins in presence of ATP.. Functionally, ATP-dependent serine protease that mediates the selective degradation of misfolded and unassembled polypeptides in the peroxisomal matrix. Necessary for type 2 peroxisome targeting signal (PTS2)-containing protein processing and facilitates peroxisome matrix protein import. May indirectly regulate peroxisomal fatty acid beta-oxidation through degradation of the self-processed forms of TYSND1. This chain is Lon protease homolog 2, peroxisomal, found in Homo sapiens (Human).